Reading from the N-terminus, the 325-residue chain is Solute-binding protein Bpro_4736 (325 aa).

The first 27 residues, 1 to 27, serve as a signal peptide directing secretion; that stretch reads MKTRTLKVLKPTLALLLAASFSAGALA. Residue 168–173 participates in phenylglyoxylate binding; that stretch reads RISPVY.

Belongs to the bacterial solute-binding protein 7 family. In terms of assembly, the complex is comprised of an extracytoplasmic solute-binding protein and a heteromeric permease formed by two transmembrane proteins.

The protein resides in the periplasm. Solute-binding protein that binds phenylglyoxylate (in vitro). Probably part of a tripartite ATP-independent periplasmic (TRAP) transport system that mediates solute transport into the cytoplasm. The polypeptide is Solute-binding protein Bpro_4736 (Polaromonas sp. (strain JS666 / ATCC BAA-500)).